The following is a 201-amino-acid chain: ATP-dependent Clp protease proteolytic subunit (201 aa).

S103 acts as the Nucleophile in catalysis. The active site involves H128.

Belongs to the peptidase S14 family. Fourteen ClpP subunits assemble into 2 heptameric rings which stack back to back to give a disk-like structure with a central cavity, resembling the structure of eukaryotic proteasomes.

The protein localises to the cytoplasm. The catalysed reaction is Hydrolysis of proteins to small peptides in the presence of ATP and magnesium. alpha-casein is the usual test substrate. In the absence of ATP, only oligopeptides shorter than five residues are hydrolyzed (such as succinyl-Leu-Tyr-|-NHMec, and Leu-Tyr-Leu-|-Tyr-Trp, in which cleavage of the -Tyr-|-Leu- and -Tyr-|-Trp bonds also occurs).. Its function is as follows. Cleaves peptides in various proteins in a process that requires ATP hydrolysis. Has a chymotrypsin-like activity. Plays a major role in the degradation of misfolded proteins. This chain is ATP-dependent Clp protease proteolytic subunit, found in Bordetella avium (strain 197N).